Here is a 282-residue protein sequence, read N- to C-terminus: Shikimate dehydrogenase (NADP(+)) (282 aa).

Shikimate is bound by residues 16–18 (SLS) and Thr-63. Lys-67 acts as the Proton acceptor in catalysis. Residues Asn-88 and Asp-103 each coordinate shikimate. NADP(+)-binding positions include 128–132 (GAGGA) and Gly-243.

Belongs to the shikimate dehydrogenase family. Homodimer.

The enzyme catalyses shikimate + NADP(+) = 3-dehydroshikimate + NADPH + H(+). The protein operates within metabolic intermediate biosynthesis; chorismate biosynthesis; chorismate from D-erythrose 4-phosphate and phosphoenolpyruvate: step 4/7. Functionally, involved in the biosynthesis of the chorismate, which leads to the biosynthesis of aromatic amino acids. Catalyzes the reversible NADPH linked reduction of 3-dehydroshikimate (DHSA) to yield shikimate (SA). The sequence is that of Shikimate dehydrogenase (NADP(+)) from Xylella fastidiosa (strain 9a5c).